The chain runs to 121 residues: Large ribosomal subunit protein uL14 (121 aa).

It belongs to the universal ribosomal protein uL14 family. Part of the 50S ribosomal subunit. Forms a cluster with proteins L3 and L19. In the 70S ribosome, L14 and L19 interact and together make contacts with the 16S rRNA in bridges B5 and B8.

Binds to 23S rRNA. Forms part of two intersubunit bridges in the 70S ribosome. This Legionella pneumophila (strain Paris) protein is Large ribosomal subunit protein uL14.